A 203-amino-acid polypeptide reads, in one-letter code: FMN-dependent NADH:quinone oxidoreductase (203 aa).

143–146 serves as a coordination point for FMN; it reads SNGG.

This sequence belongs to the azoreductase type 1 family. As to quaternary structure, homodimer. It depends on FMN as a cofactor.

The catalysed reaction is 2 a quinone + NADH + H(+) = 2 a 1,4-benzosemiquinone + NAD(+). It catalyses the reaction N,N-dimethyl-1,4-phenylenediamine + anthranilate + 2 NAD(+) = 2-(4-dimethylaminophenyl)diazenylbenzoate + 2 NADH + 2 H(+). Functionally, quinone reductase that provides resistance to thiol-specific stress caused by electrophilic quinones. Also exhibits azoreductase activity. Catalyzes the reductive cleavage of the azo bond in aromatic azo compounds to the corresponding amines. The sequence is that of FMN-dependent NADH:quinone oxidoreductase from Streptococcus suis (strain 98HAH33).